A 205-amino-acid polypeptide reads, in one-letter code: High frequency lysogenization protein HflD homolog (205 aa).

Belongs to the HflD family.

It is found in the cytoplasm. The protein resides in the cell inner membrane. This chain is High frequency lysogenization protein HflD homolog, found in Aliivibrio fischeri (strain MJ11) (Vibrio fischeri).